Reading from the N-terminus, the 933-residue chain is DNA repair-scaffolding protein (933 aa).

3 disordered regions span residues 1-34 (MSGA…LRRG), 67-174 (SEKT…KGTL), and 205-224 (YSSD…IDSE). 3 stretches are compositionally biased toward basic and acidic residues: residues 16–29 (WHIE…ERSQ), 71–87 (GITE…KTET), and 119–132 (RDGR…RLGD). Acidic residues predominate over residues 138–148 (PEDEDIEDELQ). The segment at 175-469 (DISDCDSCAS…GTGWTHGHEK (295 aa)) is necessary for interaction with RAD51. The segment covering 214 to 224 (DPEHSLFIDSE) has biased composition (basic and acidic residues).

As to quaternary structure, found in a complex, at least composed of BLM, RAD51 and SPIDR; the complex formation is mediated by SPIDR. Interacts (via C-terminal region) with BLM; the interaction is direct. Interacts with RAD51; the interaction is direct. Interacts (via the C-terminal region) with FIGNL1 (via N-terminal one-half region); the interaction is direct.

The protein resides in the nucleus. Plays a role in DNA double-strand break (DBS) repair via homologous recombination (HR). Serves as a scaffolding protein that helps to promote the recruitment of DNA-processing enzymes like the helicase BLM and recombinase RAD51 to site of DNA damage, and hence contributes to maintain genomic integrity. In Mus musculus (Mouse), this protein is DNA repair-scaffolding protein (Spidr).